We begin with the raw amino-acid sequence, 621 residues long: Glutamyl-tRNA(Gln) amidotransferase subunit B, mitochondrial (621 aa).

The N-terminal 41 residues, 1–41, are a transit peptide targeting the mitochondrion; sequence MARLPTTELRKYLLTGQFTRRGCLHLRPSPLAPPIPPLRTL. Disordered regions lie at residues 26–86 and 106–136; these read LRPS…DNQT and SKLF…APFD. 2 stretches are compositionally biased toward low complexity: residues 38–57 and 110–120; these read LRTL…QIIP and SPASTPSSSSD.

Belongs to the GatB/GatE family. GatB subfamily. Subunit of the heterotrimeric GatCAB amidotransferase (AdT) complex, composed of A, B and C subunits.

It localises to the mitochondrion. It catalyses the reaction L-glutamyl-tRNA(Gln) + L-glutamine + ATP + H2O = L-glutaminyl-tRNA(Gln) + L-glutamate + ADP + phosphate + H(+). In terms of biological role, allows the formation of correctly charged Gln-tRNA(Gln) through the transamidation of misacylated Glu-tRNA(Gln) in the mitochondria. The reaction takes place in the presence of glutamine and ATP through an activated gamma-phospho-Glu-tRNA(Gln). This is Glutamyl-tRNA(Gln) amidotransferase subunit B, mitochondrial from Podospora anserina (strain S / ATCC MYA-4624 / DSM 980 / FGSC 10383) (Pleurage anserina).